A 350-amino-acid polypeptide reads, in one-letter code: Uroporphyrinogen decarboxylase (350 aa).

Residues 27–31 (RQAGR), Phe46, Asp76, Tyr152, Ser207, and His321 contribute to the substrate site.

This sequence belongs to the uroporphyrinogen decarboxylase family. Homodimer.

The protein localises to the cytoplasm. It carries out the reaction uroporphyrinogen III + 4 H(+) = coproporphyrinogen III + 4 CO2. It participates in porphyrin-containing compound metabolism; protoporphyrin-IX biosynthesis; coproporphyrinogen-III from 5-aminolevulinate: step 4/4. In terms of biological role, catalyzes the decarboxylation of four acetate groups of uroporphyrinogen-III to yield coproporphyrinogen-III. The sequence is that of Uroporphyrinogen decarboxylase from Listeria welshimeri serovar 6b (strain ATCC 35897 / DSM 20650 / CCUG 15529 / CIP 8149 / NCTC 11857 / SLCC 5334 / V8).